The following is a 91-amino-acid chain: Histone H1, sperm (91 aa).

Residues 1–25 (PGSPQKRAASPRKSPRKGSPKKSPM) form a disordered region. Basic residues predominate over residues 9–20 (ASPRKSPRKGSP). The region spanning 18 to 91 (GSPKKSPMIR…TGATGRFRVG (74 aa)) is the H15 domain.

Belongs to the histone H1/H5 family.

The protein localises to the nucleus. It is found in the chromosome. Its function is as follows. Histones H1 are necessary for the condensation of nucleosome chains into higher-order structures. This Sphaerechinus granularis (Purple sea urchin) protein is Histone H1, sperm.